The chain runs to 41 residues: Large ribosomal subunit protein bL36 (41 aa).

Belongs to the bacterial ribosomal protein bL36 family.

The sequence is that of Large ribosomal subunit protein bL36 from Sinorhizobium fredii (strain NBRC 101917 / NGR234).